The following is a 581-amino-acid chain: Protein LYRIC (581 aa).

At 1–49 (MAARSWQDELAQQAEEGSARLRELLSVGLGFLRTELGLDLGLEPKRYPS) the chain is on the lumenal side. The tract at residues 1–71 (MAARSWQDEL…LLLFLLGYGW (71 aa)) is activation of NF-kappa-B. Residues 50–70 (WVILVGTGALGLLLLFLLGYG) traverse the membrane as a helical segment. Residues 71-581 (WAAACAGARK…KKKKKARRET (511 aa)) lie on the Cytoplasmic side of the membrane. The interval 72–168 (AAACAGARKK…EKSKKNKKKS (97 aa)) is interaction with BCCIP. A disordered region spans residues 77 to 221 (GARKKRRSPP…DSGSLDSTIP (145 aa)). The segment at 100–204 (EDPAQLKNLR…ISHREKRQQR (105 aa)) is interaction with RELA. The segment covering 108–126 (LRSEEQKKKNRKKLPEKPK) has biased composition (basic and acidic residues). Residue Thr-142 is modified to Phosphothreonine. Basic residues predominate over residues 159–168 (EKSKKNKKKS). Ser-179 bears the Phosphoserine mark. Residues 197–207 (HREKRQQRKRD) show a composition bias toward basic residues. Phosphoserine occurs at positions 215 and 250. Lys-263 bears the N6-acetyllysine mark. A disordered region spans residues 280 to 581 (VNGGGWSEKS…KKKKKARRET (302 aa)). Phosphoserine occurs at positions 297, 305, and 310. A compositionally biased stretch (polar residues) spans 318 to 331 (QSAWTQDPGDTNAN). Phosphoserine occurs at positions 343 and 368. Composition is skewed to polar residues over residues 353–371 (EPVS…SRNQ) and 382–393 (NGLSSADPSSDW). The segment at 380–442 (GLNGLSSADP…EGALPTGKSK (63 aa)) is lung-homing for mammary tumors. Residues Ser-414 and Ser-425 each carry the phosphoserine modification. Over residues 421 to 433 (DQKDSDDDKEKGE) the composition is skewed to basic and acidic residues. The span at 440 to 450 (KSKKKKKKKKK) shows a compositional bias: basic residues. Phosphoserine is present on residues Ser-456, Ser-477, Ser-493, and Ser-495. Polar residues-rich tracts occupy residues 519-535 (PSVT…SSQV) and 548-567 (NAKQ…NWES). Ser-567 is subject to Phosphoserine. Residues 570 to 581 (QIKKKKKARRET) are compositionally biased toward basic residues.

In terms of assembly, interacts with BCCIP, CREBBP/CBP and RELA/p65. Widely expressed, with highest levels in liver, kidney, prostate and small intestine. Not detected in endothelial cells.

It localises to the endoplasmic reticulum membrane. Its subcellular location is the nucleus membrane. The protein localises to the cell junction. The protein resides in the tight junction. It is found in the nucleus. It localises to the nucleolus. Its subcellular location is the cytoplasm. The protein localises to the perinuclear region. In terms of biological role, down-regulates SLC1A2/EAAT2 promoter activity when expressed ectopically. Activates the nuclear factor kappa-B (NF-kappa-B) transcription factor. Promotes anchorage-independent growth of immortalized melanocytes and astrocytes which is a key component in tumor cell expansion. Promotes lung metastasis and also has an effect on bone and brain metastasis, possibly by enhancing the seeding of tumor cells to the target organ endothelium. Induces chemoresistance. The chain is Protein LYRIC (Mtdh) from Rattus norvegicus (Rat).